Here is a 258-residue protein sequence, read N- to C-terminus: Tryptophan synthase alpha chain (258 aa).

Active-site proton acceptor residues include Glu-52 and Asp-63.

It belongs to the TrpA family. In terms of assembly, tetramer of two alpha and two beta chains.

The enzyme catalyses (1S,2R)-1-C-(indol-3-yl)glycerol 3-phosphate + L-serine = D-glyceraldehyde 3-phosphate + L-tryptophan + H2O. Its pathway is amino-acid biosynthesis; L-tryptophan biosynthesis; L-tryptophan from chorismate: step 5/5. Its function is as follows. The alpha subunit is responsible for the aldol cleavage of indoleglycerol phosphate to indole and glyceraldehyde 3-phosphate. The polypeptide is Tryptophan synthase alpha chain (Streptococcus pneumoniae (strain P1031)).